A 296-amino-acid polypeptide reads, in one-letter code: Light-independent protochlorophyllide reductase iron-sulfur ATP-binding protein (296 aa).

Residues 1 to 20 are disordered; the sequence is MTTTLSRPTDGEGSVQVQQD. ATP contacts are provided by residues 39–44 and lysine 68; that span reads GIGKST. Residue serine 43 participates in Mg(2+) binding. [4Fe-4S] cluster-binding residues include cysteine 124 and cysteine 158. Residue 209–210 participates in ATP binding; that stretch reads NR.

It belongs to the NifH/BchL/ChlL family. Homodimer. Protochlorophyllide reductase is composed of three subunits; ChlL, ChlN and ChlB. Requires [4Fe-4S] cluster as cofactor.

The enzyme catalyses chlorophyllide a + oxidized 2[4Fe-4S]-[ferredoxin] + 2 ADP + 2 phosphate = protochlorophyllide a + reduced 2[4Fe-4S]-[ferredoxin] + 2 ATP + 2 H2O. It participates in porphyrin-containing compound metabolism; chlorophyll biosynthesis (light-independent). In terms of biological role, component of the dark-operative protochlorophyllide reductase (DPOR) that uses Mg-ATP and reduced ferredoxin to reduce ring D of protochlorophyllide (Pchlide) to form chlorophyllide a (Chlide). This reaction is light-independent. The L component serves as a unique electron donor to the NB-component of the complex, and binds Mg-ATP. The sequence is that of Light-independent protochlorophyllide reductase iron-sulfur ATP-binding protein from Synechococcus sp. (strain CC9902).